The chain runs to 528 residues: DEAD-box ATP-dependent RNA helicase 6 (528 aa).

Low complexity-rich tracts occupy residues 1-15 (MNNN…PPGI) and 65-80 (QQYV…QQQQ). The tract at residues 1–80 (MNNNNNNRGR…GYPQQIQQQQ (80 aa)) is disordered. Residues 154 to 182 (NEFEDYFLKRDLLRGIYEKGFEKPSPIQE) carry the Q motif motif. The Helicase ATP-binding domain occupies 185–355 (IPIALTGSDI…DRYLKKPYII (171 aa)). 198–205 (AKNGTGKT) is a binding site for ATP. At T260 the chain carries Phosphothreonine. The DEAD box motif lies at 303–306 (DEAD). Residues 365 to 525 (GVTQYYAFVE…PIPSLIDKAI (161 aa)) enclose the Helicase C-terminal domain.

It belongs to the DEAD box helicase family. DDX6/DHH1 subfamily.

The protein resides in the cytoplasm. Its subcellular location is the P-body. It carries out the reaction ATP + H2O = ADP + phosphate + H(+). In terms of biological role, ATP-dependent RNA helicase involved in mRNA turnover, and more specifically in mRNA decapping. The sequence is that of DEAD-box ATP-dependent RNA helicase 6 (RH6) from Arabidopsis thaliana (Mouse-ear cress).